The chain runs to 394 residues: NAD(P)H-quinone oxidoreductase subunit H (394 aa).

It belongs to the complex I 49 kDa subunit family. NDH-1 can be composed of about 15 different subunits; different subcomplexes with different compositions have been identified which probably have different functions. Post-translationally, the initiator methionine has been seen to be kept and removed.

Its subcellular location is the cellular thylakoid membrane. The enzyme catalyses a plastoquinone + NADH + (n+1) H(+)(in) = a plastoquinol + NAD(+) + n H(+)(out). It carries out the reaction a plastoquinone + NADPH + (n+1) H(+)(in) = a plastoquinol + NADP(+) + n H(+)(out). NDH-1 shuttles electrons from an unknown electron donor, via FMN and iron-sulfur (Fe-S) centers, to quinones in the respiratory and/or the photosynthetic chain. The immediate electron acceptor for the enzyme in this species is believed to be plastoquinone. Couples the redox reaction to proton translocation, and thus conserves the redox energy in a proton gradient. Cyanobacterial NDH-1 also plays a role in inorganic carbon-concentration. The protein is NAD(P)H-quinone oxidoreductase subunit H (ndhH) of Synechocystis sp. (strain ATCC 27184 / PCC 6803 / Kazusa).